The following is a 353-amino-acid chain: 4-hydroxy-3-methylbut-2-en-1-yl diphosphate synthase (flavodoxin) (353 aa).

[4Fe-4S] cluster contacts are provided by C265, C268, C300, and E307.

The protein belongs to the IspG family. The cofactor is [4Fe-4S] cluster.

It carries out the reaction (2E)-4-hydroxy-3-methylbut-2-enyl diphosphate + oxidized [flavodoxin] + H2O + 2 H(+) = 2-C-methyl-D-erythritol 2,4-cyclic diphosphate + reduced [flavodoxin]. Its pathway is isoprenoid biosynthesis; isopentenyl diphosphate biosynthesis via DXP pathway; isopentenyl diphosphate from 1-deoxy-D-xylulose 5-phosphate: step 5/6. Functionally, converts 2C-methyl-D-erythritol 2,4-cyclodiphosphate (ME-2,4cPP) into 1-hydroxy-2-methyl-2-(E)-butenyl 4-diphosphate. The chain is 4-hydroxy-3-methylbut-2-en-1-yl diphosphate synthase (flavodoxin) from Sulfurihydrogenibium sp. (strain YO3AOP1).